The primary structure comprises 460 residues: CUGBP Elav-like family member 6 (460 aa).

Positions 1 to 10 are enriched in low complexity; sequence MAAAPGGSAP. The tract at residues 1–37 is disordered; sequence MAAAPGGSAPPAGPSPRLAFSTADSGGGMSGLNPGPA. 2 consecutive RRM domains span residues 46-127 and 134-214; these read IKLF…PAAS and RKLF…LADT. Residues 316 to 336 form a disordered region; the sequence is NGFGSLTPQSNGQPGSDTLYN. Over residues 319-336 the composition is skewed to polar residues; the sequence is GSLTPQSNGQPGSDTLYN. Positions 375 to 453 constitute an RRM 3 domain; sequence CNLFIYHLPQ…KRLKVQLKRP (79 aa).

The protein belongs to the CELF/BRUNOL family.

The protein localises to the nucleus. It localises to the cytoplasm. Functionally, RNA-binding protein implicated in the regulation of pre-mRNA alternative splicing. Mediates exon inclusion and/or exclusion in pre-mRNA that are subject to tissue-specific and developmentally regulated alternative splicing. Specifically activates exon 5 inclusion of TNNT2 in a muscle-specific splicing enhancer (MSE)-dependent manner. Promotes also exon exclusion of INSR pre-mRNA. This is CUGBP Elav-like family member 6 (Celf6) from Mus musculus (Mouse).